The following is a 251-amino-acid chain: Aspartate/glutamate leucyltransferase (251 aa).

This sequence belongs to the R-transferase family. Bpt subfamily.

It is found in the cytoplasm. It carries out the reaction N-terminal L-glutamyl-[protein] + L-leucyl-tRNA(Leu) = N-terminal L-leucyl-L-glutamyl-[protein] + tRNA(Leu) + H(+). It catalyses the reaction N-terminal L-aspartyl-[protein] + L-leucyl-tRNA(Leu) = N-terminal L-leucyl-L-aspartyl-[protein] + tRNA(Leu) + H(+). Functions in the N-end rule pathway of protein degradation where it conjugates Leu from its aminoacyl-tRNA to the N-termini of proteins containing an N-terminal aspartate or glutamate. This Stenotrophomonas maltophilia (strain K279a) protein is Aspartate/glutamate leucyltransferase.